A 354-amino-acid chain; its full sequence is Arginase (354 aa).

Positions 136, 159, 161, and 163 each coordinate Mn(2+). The L-arginine site is built by asparagine 165, serine 172, and aspartate 217. Mn(2+)-binding residues include aspartate 266 and aspartate 268.

It belongs to the arginase family. As to quaternary structure, homotrimer; oligomerization is dependent on Mn(2+) binding. Mn(2+) is required as a cofactor.

It carries out the reaction L-arginine + H2O = urea + L-ornithine. It participates in nitrogen metabolism; urea cycle; L-ornithine and urea from L-arginine: step 1/1. Functionally, catalyzes the hydrolysis of L-arginine into urea and L-ornithine, which is a precursor for polyamine biosynthesis. May play a role in parasite intra-hepatic development during the host liver stage. The polypeptide is Arginase (Plasmodium berghei (strain Anka)).